The primary structure comprises 391 residues: Terminal nucleotidyltransferase 5C (391 aa).

Belongs to the TENT family. Interacts with BCCIP and PABPC1; the interaction has no effect on TENT5C poly(A) polymerase function. Interacts with PLK4; this interaction leads to the TENT5C recruitment into the centrosome.

It localises to the nucleus. The protein resides in the cytoplasm. It is found in the cytoskeleton. The protein localises to the microtubule organizing center. Its subcellular location is the centrosome. It carries out the reaction RNA(n) + ATP = RNA(n)-3'-adenine ribonucleotide + diphosphate. Its function is as follows. Catalyzes the transfer of one adenosine molecule from an ATP to an mRNA poly(A) tail bearing a 3'-OH terminal group and enhances mRNA stability and gene expression. Can also elongate RNA oligos ending with uridine molecule, provided that the sequence is adenosine-rich. Mainly targets mRNAs encoding endoplasmic reticulum-targeted protein. This is Terminal nucleotidyltransferase 5C from Rattus norvegicus (Rat).